The following is a 466-amino-acid chain: 20-hydroxyecdysone protein (466 aa).

A signal peptide spans 1-16 (MKPVALILVFLAISQA). The 1; approximate repeat unit spans residues 48–50 (EVK). The 16 X repeats stretch occupies residues 48–157 (EVKAEEVKPE…EIKKEATEIK (110 aa)). Residues 53–55 (EVK) form a 2; approximate repeat. Residues 55–94 (KPEEVKPIAQEEKAKDLKEEVKPEIKPEIKEQPKPDIKDE) are disordered. One copy of the 3; approximate repeat lies at 58–60 (EVK). One copy of the 4; approximate repeat lies at 70–72 (DLK). The 5; approximate repeat unit spans residues 74 to 76 (EVK). The stretch at 78–80 (EIK) is one 6; approximate repeat. One copy of the 7; approximate repeat lies at 82 to 84 (EIK). An 8; approximate repeat occupies 90-92 (DIK). Residues 94–96 (EIK) form a 9; approximate repeat. The stretch at 98-100 (DLK) is one 10; approximate repeat. Residues 102–104 (DIK) form an 11; approximate repeat. Residues 106–108 (ELK) form a 12; approximate repeat. The interval 119-220 (PNAKPLELKE…QQSTTQGNFV (102 aa)) is disordered. Positions 124 to 160 (LELKEKSLEAEEKPQEIKEEVQQPEIKKEATEIKEEP) are enriched in basic and acidic residues. Residues 125 to 127 (ELK) form a 13; approximate repeat. Residues 139–141 (EIK) form a 14; approximate repeat. The 15; approximate repeat unit spans residues 148 to 150 (EIK). One copy of the 16; approximate repeat lies at 155–157 (EIK). Positions 170-180 (AEETVVVPAEE) are enriched in low complexity. The segment covering 185-194 (PVEQEQSENQ) has biased composition (polar residues). Residues 203-216 (QATQATPTQQSTTQ) show a composition bias toward low complexity. 2 N-linked (GlcNAc...) asparagine glycosylation sites follow: Asn-294 and Asn-352. Residues 378–435 (RPQNAPAAAPATQATEKPAVDDKIDPANDEVGEFVPESDNELRASGENIDDSFEDAGV) are disordered. Residues 379-394 (PQNAPAAAPATQATEK) show a composition bias toward low complexity. Acidic residues predominate over residues 404–416 (ANDEVGEFVPESD).

Its subcellular location is the secreted. Its function is as follows. Probably has an essential role in embryogenesis, induces morphogenesis of imaginal disks, and may participate in multimolecular aggregates. The sequence is that of 20-hydroxyecdysone protein (ImpE2) from Drosophila melanogaster (Fruit fly).